Consider the following 345-residue polypeptide: Phosphoribosylformylglycinamidine cyclo-ligase (345 aa).

This sequence belongs to the AIR synthase family.

It is found in the cytoplasm. The enzyme catalyses 2-formamido-N(1)-(5-O-phospho-beta-D-ribosyl)acetamidine + ATP = 5-amino-1-(5-phospho-beta-D-ribosyl)imidazole + ADP + phosphate + H(+). It participates in purine metabolism; IMP biosynthesis via de novo pathway; 5-amino-1-(5-phospho-D-ribosyl)imidazole from N(2)-formyl-N(1)-(5-phospho-D-ribosyl)glycinamide: step 2/2. The sequence is that of Phosphoribosylformylglycinamidine cyclo-ligase from Shewanella woodyi (strain ATCC 51908 / MS32).